Reading from the N-terminus, the 673-residue chain is Probable potassium transport system protein Kup 1 (673 aa).

The next 13 membrane-spanning stretches (helical) occupy residues 14 to 34 (GAGFIIAMGIVYGDIGTSPLY), 58 to 78 (LSLIIWTLTLITTVKYVWIAL), 101 to 121 (WLIIPAMIGGAALLSDGALTP), 147 to 167 (LPIVIITLAILAILFLIQRFG), 175 to 195 (FGPVMFIWFSFFGITGLINLF), 196 to 216 (GDFSVLQAINPYWAIHLLLSP), 220 to 240 (AGIFVLGSVFLATTGAEALYS), 252 to 272 (VSWPFVKVCIILSYCGQAAWL), 294 to 314 (LIIFSVILATLAAIIASQALI), 345 to 365 (LYIPAVNLGLWLAASFIVVYF), 374 to 394 (AYGLAITVTMLMTTILLTVYL), 403 to 423 (VFVVLFFGAFIFIEGLFFAAS), and 427 to 447 (FLHGGYVVVILAALILFVMAI).

It belongs to the HAK/KUP transporter (TC 2.A.72) family.

It localises to the cell membrane. It carries out the reaction K(+)(in) + H(+)(in) = K(+)(out) + H(+)(out). Its function is as follows. Transport of potassium into the cell. Likely operates as a K(+):H(+) symporter. In Lactococcus lactis subsp. cremoris (strain SK11), this protein is Probable potassium transport system protein Kup 1.